Reading from the N-terminus, the 152-residue chain is Small ribosomal subunit protein uS9 (152 aa).

This sequence belongs to the universal ribosomal protein uS9 family.

This chain is Small ribosomal subunit protein uS9, found in Mycobacterium ulcerans (strain Agy99).